We begin with the raw amino-acid sequence, 180 residues long: Large ribosomal subunit protein uL5 (180 aa).

This sequence belongs to the universal ribosomal protein uL5 family. In terms of assembly, part of the 50S ribosomal subunit; part of the 5S rRNA/L5/L18/L25 subcomplex. Contacts the 5S rRNA and the P site tRNA. Forms a bridge to the 30S subunit in the 70S ribosome.

Its function is as follows. This is one of the proteins that bind and probably mediate the attachment of the 5S RNA into the large ribosomal subunit, where it forms part of the central protuberance. In the 70S ribosome it contacts protein S13 of the 30S subunit (bridge B1b), connecting the 2 subunits; this bridge is implicated in subunit movement. Contacts the P site tRNA; the 5S rRNA and some of its associated proteins might help stabilize positioning of ribosome-bound tRNAs. This chain is Large ribosomal subunit protein uL5, found in Xanthomonas campestris pv. campestris (strain 8004).